A 197-amino-acid polypeptide reads, in one-letter code: Isopentenyl-diphosphate Delta-isomerase (197 aa).

Residues H41 and H48 each coordinate Mn(2+). The Nudix hydrolase domain occupies 46 to 183; sequence RLHRAFSVFL…AWFMTVLDAA (138 aa). C83 is an active-site residue. C83 provides a ligand contact to Mg(2+). H85 lines the Mn(2+) pocket. E103 is a binding site for Mg(2+). Mn(2+)-binding residues include E130 and E132. E132 is a catalytic residue.

This sequence belongs to the IPP isomerase type 1 family. Mg(2+) serves as cofactor. The cofactor is Mn(2+).

Its subcellular location is the cytoplasm. It carries out the reaction isopentenyl diphosphate = dimethylallyl diphosphate. It participates in isoprenoid biosynthesis; dimethylallyl diphosphate biosynthesis; dimethylallyl diphosphate from isopentenyl diphosphate: step 1/1. In terms of biological role, catalyzes the 1,3-allylic rearrangement of the homoallylic substrate isopentenyl (IPP) to its highly electrophilic allylic isomer, dimethylallyl diphosphate (DMAPP). In Streptomyces coelicolor (strain ATCC BAA-471 / A3(2) / M145), this protein is Isopentenyl-diphosphate Delta-isomerase.